We begin with the raw amino-acid sequence, 464 residues long: MPVDLSTTLSWKSATGEAATMLDELQPNILKAHVRDRLTVLFLGFGDAAEARTFLNGLSGLMKSARTHLQEVEAHKLTKAVGTPYLGVGLTAHGYATLGVTAPADPSFTAGAKAAVEKLADPAVTEWEGHYQQTIDAVLLLGDATAGPVRTLRRQVEALRPASVTVVGEESGLGLANANGDGIEHFGYVDGRSQPLFLTEDVDAERDTTDGVNDWDPSAPLEQVLVPDPAAPDPTVHFGSYFVFRKLEQNVRLFKEAERDLAHDLGLRGEDRERAGAMLVGRFEDGTPLTAQSAPGSHHPVGNDFSYDSDKLGQKCPFHAHIRKTNPRGSGGAEAPEEERKHLMARRGQTYGRRHDDPNADLPPRLRPAKDVGLLFMAFNSNLGNQFEFTQQIWANNPAFPFPPDGSQPGLDPVIGQGARAPQKYAPEWGHNNVAEATDPIPQAVTMKGGEYFFMPSLAFLRSL.

D203 (proton acceptor) is an active-site residue. Mn(2+) contacts are provided by E258, E273, and E284. H321 is a heme binding site.

The protein belongs to the DyP-type peroxidase family. In terms of assembly, exists both as a monomeric and oligomeric species in solution; the monomeric form contains no bound heme cofactor and is inactive. It depends on heme b as a cofactor. The cofactor is Mn(2+).

It is found in the secreted. It catalyses the reaction 1-(4-hydroxy-3-methoxyphenyl)-2-(2-methoxyphenoxy)propane-1,3-diol + H2O2 = guaiacol + vanillin + glycolaldehyde + H2O. It carries out the reaction 2 Mn(2+) + H2O2 + 2 H(+) = 2 Mn(3+) + 2 H2O. The catalysed reaction is 2 a phenolic donor + H2O2 = 2 a phenolic radical donor + 2 H2O. The enzyme catalyses Reactive Blue 5 + 2 H2O2 = 2,2'-disulfonyl azobenzene + 3-[(4-amino-6-chloro-1,3,5-triazin-2-yl)amino]benzenesulfonate + phthalate + 2 H2O + 2 H(+). Its function is as follows. Displays both high peroxidase and manganese peroxidase activity. Is likely involved in lignin degradation. Also has a Mn-dependent oxidase mode of action that expands its substrate scope in vitro; is thus able to catalyze the O(2)- and Mn-dependent oxidative decarboxylation of 4-methoxymandelate to anisaldehyde. This Amycolatopsis sp. (strain ATCC 39116 / 75iv2) protein is Multifunctional dye peroxidase DyP2.